The following is a 729-amino-acid chain: Phosphoribosylformylglycinamidine synthase subunit PurL (729 aa).

H54 is a catalytic residue. Positions 57 and 96 each coordinate ATP. E98 contacts Mg(2+). Residues 99 to 102 (SHNH) and R121 contribute to the substrate site. H100 acts as the Proton acceptor in catalysis. D122 lines the Mg(2+) pocket. Q245 contributes to the substrate binding site. D273 contacts Mg(2+). 317 to 319 (ETQ) serves as a coordination point for substrate. Positions 495 and 532 each coordinate ATP. N533 serves as a coordination point for Mg(2+). Residue S535 coordinates substrate.

The protein belongs to the FGAMS family. Monomer. Part of the FGAM synthase complex composed of 1 PurL, 1 PurQ and 2 PurS subunits.

The protein localises to the cytoplasm. The enzyme catalyses N(2)-formyl-N(1)-(5-phospho-beta-D-ribosyl)glycinamide + L-glutamine + ATP + H2O = 2-formamido-N(1)-(5-O-phospho-beta-D-ribosyl)acetamidine + L-glutamate + ADP + phosphate + H(+). It functions in the pathway purine metabolism; IMP biosynthesis via de novo pathway; 5-amino-1-(5-phospho-D-ribosyl)imidazole from N(2)-formyl-N(1)-(5-phospho-D-ribosyl)glycinamide: step 1/2. Its function is as follows. Part of the phosphoribosylformylglycinamidine synthase complex involved in the purines biosynthetic pathway. Catalyzes the ATP-dependent conversion of formylglycinamide ribonucleotide (FGAR) and glutamine to yield formylglycinamidine ribonucleotide (FGAM) and glutamate. The FGAM synthase complex is composed of three subunits. PurQ produces an ammonia molecule by converting glutamine to glutamate. PurL transfers the ammonia molecule to FGAR to form FGAM in an ATP-dependent manner. PurS interacts with PurQ and PurL and is thought to assist in the transfer of the ammonia molecule from PurQ to PurL. The protein is Phosphoribosylformylglycinamidine synthase subunit PurL of Staphylococcus aureus (strain bovine RF122 / ET3-1).